The primary structure comprises 359 residues: N-acetyl-gamma-glutamyl-phosphate reductase (359 aa).

C162 is an active-site residue.

This sequence belongs to the NAGSA dehydrogenase family. Type 1 subfamily.

It localises to the cytoplasm. The catalysed reaction is N-acetyl-L-glutamate 5-semialdehyde + phosphate + NADP(+) = N-acetyl-L-glutamyl 5-phosphate + NADPH + H(+). It functions in the pathway amino-acid biosynthesis; L-arginine biosynthesis; N(2)-acetyl-L-ornithine from L-glutamate: step 3/4. In terms of biological role, catalyzes the NADPH-dependent reduction of N-acetyl-5-glutamyl phosphate to yield N-acetyl-L-glutamate 5-semialdehyde. This Prochlorococcus marinus (strain MIT 9211) protein is N-acetyl-gamma-glutamyl-phosphate reductase.